A 119-amino-acid chain; its full sequence is Protein Wnt-4 (119 aa).

Serine 1 is lipidated: O-palmitoleoyl serine; by PORCN. 2 disulfide bridges follow: cysteine 69-cysteine 100 and cysteine 85-cysteine 95. Asparagine 86 carries N-linked (GlcNAc...) asparagine glycosylation.

This sequence belongs to the Wnt family. Palmitoleoylation is required for efficient binding to frizzled receptors. Depalmitoleoylation leads to Wnt signaling pathway inhibition.

Its subcellular location is the secreted. The protein localises to the extracellular space. It localises to the extracellular matrix. Functionally, ligand for members of the frizzled family of seven transmembrane receptors. Plays an important role in embryonic development. This Plestiodon skiltonianus (Western skink) protein is Protein Wnt-4 (WNT-4).